Reading from the N-terminus, the 211-residue chain is Protein GrpE (211 aa).

The interval Met-1 to Leu-43 is disordered. A compositionally biased stretch (low complexity) spans Asp-11–Ala-23. Residues Glu-33 to Leu-43 are compositionally biased toward basic and acidic residues.

The protein belongs to the GrpE family. Homodimer.

The protein localises to the cytoplasm. Functionally, participates actively in the response to hyperosmotic and heat shock by preventing the aggregation of stress-denatured proteins, in association with DnaK and GrpE. It is the nucleotide exchange factor for DnaK and may function as a thermosensor. Unfolded proteins bind initially to DnaJ; upon interaction with the DnaJ-bound protein, DnaK hydrolyzes its bound ATP, resulting in the formation of a stable complex. GrpE releases ADP from DnaK; ATP binding to DnaK triggers the release of the substrate protein, thus completing the reaction cycle. Several rounds of ATP-dependent interactions between DnaJ, DnaK and GrpE are required for fully efficient folding. The polypeptide is Protein GrpE (Rhizobium etli (strain ATCC 51251 / DSM 11541 / JCM 21823 / NBRC 15573 / CFN 42)).